Consider the following 105-residue polypeptide: Met repressor (105 aa).

The protein belongs to the MetJ family. In terms of assembly, homodimer.

The protein localises to the cytoplasm. In terms of biological role, this regulatory protein, when combined with SAM (S-adenosylmethionine) represses the expression of the methionine regulon and of enzymes involved in SAM synthesis. This is Met repressor from Shigella boydii serotype 18 (strain CDC 3083-94 / BS512).